Reading from the N-terminus, the 963-residue chain is Importin-13 (963 aa).

20 HEAT repeats span residues 24–54 (ESVE…QAQV), 56–88 (PQAW…KTSR), 95–135 (TDQY…LSMM), 142–179 (AVAD…EFQT), 194–231 (LAVE…SWVQ), 236–268 (LQDC…NAIS), 276–325 (VNTL…ALLD), 330–372 (WQSF…DDIL), 375–438 (EAEK…YEML), 440–476 (AELL…FQSI), 487–522 (VVPG…WLAD), 524–558 (PVMI…CREC), 562–600 (LPPY…LLSA), 603–648 (VEEI…SNLF), 676–716 (PVVV…VKTL), 720–754 (FAPM…VHIF), 761–803 (FPPI…ALKR), 815–845 (VKAV…TELL), 860–893 (EDGR…FALN), and 897–931 (FSLL…QQIL). Residues 45 to 111 (AQKWLMQAQV…KAQLFTQITR (67 aa)) form the Importin N-terminal domain.

The protein belongs to the importin beta family. In terms of assembly, interacts with UBC9, RAN, RBM8A, eIF-1A and PAX6.

The protein localises to the cytoplasm. It is found in the nucleus. Functions in nuclear protein import as nuclear transport receptor. Serves as receptor for nuclear localization signals (NLS) in cargo substrates. Is thought to mediate docking of the importin/substrate complex to the nuclear pore complex (NPC) through binding to nucleoporin and the complex is subsequently translocated through the pore by an energy requiring, Ran-dependent mechanism. At the nucleoplasmic side of the NPC, Ran binds to the importin, the importin/substrate complex dissociates and importin is re-exported from the nucleus to the cytoplasm where GTP hydrolysis releases Ran. The directionality of nuclear import is thought to be conferred by an asymmetric distribution of the GTP- and GDP-bound forms of Ran between the cytoplasm and nucleus. Mediates the nuclear import of UBC9, the RBM8A/MAGOH complex, PAX6 and probably other members of the paired homeobox family. Also mediates nuclear export of eIF-1A, and the cytoplasmic release of eIF-1A is triggered by the loading of import substrates onto IPO13. The chain is Importin-13 (IPO13) from Pongo abelii (Sumatran orangutan).